The sequence spans 403 residues: Na(+)-translocating NADH-quinone reductase subunit B (403 aa).

9 helical membrane passes run 56 to 76 (MMII…YNVG), 121 to 141 (AYFL…EVLF), 164 to 184 (LPPS…VVLG), 225 to 245 (GFAG…NILG), 260 to 280 (GSMG…LLLT), 287 to 307 (IVAG…AIGS), 312 to 332 (MFAM…GMIF), 348 to 368 (WLFG…NPAF), and 371 to 391 (GMML…HFVV). At Thr-230 the chain carries FMN phosphoryl threonine.

It belongs to the NqrB/RnfD family. Composed of six subunits; NqrA, NqrB, NqrC, NqrD, NqrE and NqrF. The cofactor is FMN.

It is found in the cell inner membrane. It catalyses the reaction a ubiquinone + n Na(+)(in) + NADH + H(+) = a ubiquinol + n Na(+)(out) + NAD(+). In terms of biological role, NQR complex catalyzes the reduction of ubiquinone-1 to ubiquinol by two successive reactions, coupled with the transport of Na(+) ions from the cytoplasm to the periplasm. NqrA to NqrE are probably involved in the second step, the conversion of ubisemiquinone to ubiquinol. This is Na(+)-translocating NADH-quinone reductase subunit B from Pseudomonas aeruginosa (strain LESB58).